We begin with the raw amino-acid sequence, 564 residues long: Ribulokinase (564 aa).

Belongs to the ribulokinase family.

It catalyses the reaction D-ribulose + ATP = D-ribulose 5-phosphate + ADP + H(+). It carries out the reaction L-ribulose + ATP = L-ribulose 5-phosphate + ADP + H(+). It functions in the pathway carbohydrate degradation; L-arabinose degradation via L-ribulose; D-xylulose 5-phosphate from L-arabinose (bacterial route): step 2/3. The chain is Ribulokinase from Geobacillus thermodenitrificans (strain NG80-2).